A 362-amino-acid polypeptide reads, in one-letter code: Histidinol-phosphate aminotransferase (362 aa).

Position 222 is an N6-(pyridoxal phosphate)lysine (Lys-222).

This sequence belongs to the class-II pyridoxal-phosphate-dependent aminotransferase family. Histidinol-phosphate aminotransferase subfamily. In terms of assembly, homodimer. Requires pyridoxal 5'-phosphate as cofactor.

It catalyses the reaction L-histidinol phosphate + 2-oxoglutarate = 3-(imidazol-4-yl)-2-oxopropyl phosphate + L-glutamate. Its pathway is amino-acid biosynthesis; L-histidine biosynthesis; L-histidine from 5-phospho-alpha-D-ribose 1-diphosphate: step 7/9. The sequence is that of Histidinol-phosphate aminotransferase from Shewanella amazonensis (strain ATCC BAA-1098 / SB2B).